The primary structure comprises 229 residues: UPF0319 protein Sbal223_2728 (229 aa).

The N-terminal stretch at 1–21 (MKSLLPISSLLVLLGSASAFA) is a signal peptide.

Belongs to the UPF0319 family.

The chain is UPF0319 protein Sbal223_2728 from Shewanella baltica (strain OS223).